The chain runs to 91 residues: Large ribosomal subunit protein bL27 (91 aa).

Residues 1-10 (MAQKKGGGST) are compositionally biased toward gly residues. A disordered region spans residues 1–20 (MAQKKGGGSTRNGRDSQPKM).

Belongs to the bacterial ribosomal protein bL27 family.

This Verminephrobacter eiseniae (strain EF01-2) protein is Large ribosomal subunit protein bL27.